Reading from the N-terminus, the 160-residue chain is Phosphopantetheine adenylyltransferase (160 aa).

Residue S9 coordinates substrate. Residues S9–F10 and H17 each bind ATP. Substrate-binding residues include K41, I73, and K87. Residues G88–R90, E98, and Y122–S128 contribute to the ATP site.

Belongs to the bacterial CoaD family. As to quaternary structure, homohexamer. It depends on Mg(2+) as a cofactor.

The protein localises to the cytoplasm. The enzyme catalyses (R)-4'-phosphopantetheine + ATP + H(+) = 3'-dephospho-CoA + diphosphate. The protein operates within cofactor biosynthesis; coenzyme A biosynthesis; CoA from (R)-pantothenate: step 4/5. Its function is as follows. Reversibly transfers an adenylyl group from ATP to 4'-phosphopantetheine, yielding dephospho-CoA (dPCoA) and pyrophosphate. The polypeptide is Phosphopantetheine adenylyltransferase (Mycolicibacterium gilvum (strain PYR-GCK) (Mycobacterium gilvum (strain PYR-GCK))).